Here is a 192-residue protein sequence, read N- to C-terminus: Adenylate kinase (192 aa).

10-18 (GVPGVGGTT) is an ATP binding site.

The protein belongs to the archaeal adenylate kinase family. In terms of assembly, monomer.

Its subcellular location is the cytoplasm. It carries out the reaction AMP + ATP = 2 ADP. This Methanococcus maripaludis (strain C7 / ATCC BAA-1331) protein is Adenylate kinase.